The following is a 476-amino-acid chain: Zinc transporter SLC39A7 (476 aa).

Residues 7–27 (APHWVAVGLLTWAALGLLVAG) traverse the membrane as a helical segment. The segment covering 35-109 (HKDVEEDFHG…SHGHSHDSLH (75 aa)) has biased composition (basic and acidic residues). Residues 35-131 (HKDVEEDFHG…HGTSREAGAP (97 aa)) are disordered. Residue H73 is modified to Pros-methylhistidine. Residues 110–120 (HGGHGHAHREH) show a composition bias toward basic residues. The next 3 helical transmembrane spans lie at 146-166 (ALGA…LIPV), 177-197 (LQIL…LHLI), and 222-242 (GPIL…LVVE). Residues 249–320 (KGGHGHSHGH…QSPEEEKAGS (72 aa)) form a disordered region. The span at 257–292 (GHGDRHAHGDSHTHGDRHECSSKEKPSTEEEKEVGG) shows a compositional bias: basic and acidic residues. Residue S283 is modified to Phosphoserine. Helical transmembrane passes span 393–413 (VTAI…GGAV) and 417–437 (VAGG…FIYV).

This sequence belongs to the ZIP transporter (TC 2.A.5) family. KE4/Catsup subfamily. As to quaternary structure, homodimer. Post-translationally, methylation at some His residue by METTL9 leads to reduced zinc-binding. Rapidly phosphorylated by CK2 following Zn(2+) treatment. This phosphorylation is required for efficient cytosolic Zn(2+) release. In terms of tissue distribution, widely expressed. Highly expressed in the intestinal crypts.

Its subcellular location is the endoplasmic reticulum membrane. The protein localises to the golgi apparatus. It is found in the cis-Golgi network membrane. It catalyses the reaction Zn(2+)(in) = Zn(2+)(out). Its function is as follows. Transports Zn(2+) from the endoplasmic reticulum (ER)/Golgi apparatus to the cytosol, playing an essential role in the regulation of cytosolic zinc levels. Acts as a gatekeeper of zinc release from intracellular stores, requiring post-translational activation by phosphorylation, resulting in activation of multiple downstream pathways leading to cell growth and proliferation. Has an essential role in B cell development and is required for proper B cell receptor signaling. Plays an important role in maintaining intestinal epithelial homeostasis and skin dermis development by regulating ER function. Controls cell signaling pathways involved in glucose metabolism in skeletal muscle. Has a protective role against ER stress in different biological contexts. Mediates Zn(2+)-induced ferroptosis. This chain is Zinc transporter SLC39A7 (Slc39a7), found in Mus musculus (Mouse).